The chain runs to 131 residues: Small ribosomal subunit protein uS8 (131 aa).

The protein belongs to the universal ribosomal protein uS8 family. Part of the 30S ribosomal subunit. Contacts proteins S5 and S12.

Functionally, one of the primary rRNA binding proteins, it binds directly to 16S rRNA central domain where it helps coordinate assembly of the platform of the 30S subunit. The chain is Small ribosomal subunit protein uS8 from Chromobacterium violaceum (strain ATCC 12472 / DSM 30191 / JCM 1249 / CCUG 213 / NBRC 12614 / NCIMB 9131 / NCTC 9757 / MK).